A 170-amino-acid chain; its full sequence is ATP synthase subunit b (170 aa).

Residues 11-31 form a helical membrane-spanning segment; it reads AFTFGDAFFTLFAFAILLVLI.

Belongs to the ATPase B chain family. F-type ATPases have 2 components, F(1) - the catalytic core - and F(0) - the membrane proton channel. F(1) has five subunits: alpha(3), beta(3), gamma(1), delta(1), epsilon(1). F(0) has three main subunits: a(1), b(2) and c(10-14). The alpha and beta chains form an alternating ring which encloses part of the gamma chain. F(1) is attached to F(0) by a central stalk formed by the gamma and epsilon chains, while a peripheral stalk is formed by the delta and b chains.

The protein localises to the cell membrane. Functionally, f(1)F(0) ATP synthase produces ATP from ADP in the presence of a proton or sodium gradient. F-type ATPases consist of two structural domains, F(1) containing the extramembraneous catalytic core and F(0) containing the membrane proton channel, linked together by a central stalk and a peripheral stalk. During catalysis, ATP synthesis in the catalytic domain of F(1) is coupled via a rotary mechanism of the central stalk subunits to proton translocation. In terms of biological role, component of the F(0) channel, it forms part of the peripheral stalk, linking F(1) to F(0). This is ATP synthase subunit b from Listeria innocua serovar 6a (strain ATCC BAA-680 / CLIP 11262).